We begin with the raw amino-acid sequence, 243 residues long: MSLITVENLSVRYGANTVLRNVALTVEPGEIVTIVGPNGSGKTSLLKAIIGAARPAAGQVTLRPGLRIGYVPQRLHIDATLPITVERFMGLTARVTREDCMAALKIAAVPDLLKRQMSQLSGGQFQRVLLARALINKPDVLLLDEATQGLDQPGSAAFYRQIEDVRRETGCAVLMISHELHVVMSASDRVICLNGHVCCAGTPAVVASAPEYRALFGTGTGGALALYRHDHDHNHDHDHEAAE.

One can recognise an ABC transporter domain in the interval 4-219 (ITVENLSVRY…PEYRALFGTG (216 aa)). Position 36 to 43 (36 to 43 (GPNGSGKT)) interacts with ATP.

Belongs to the ABC transporter superfamily. Zinc importer (TC 3.A.1.15.5) family. In terms of assembly, the complex is composed of two ATP-binding proteins (ZnuC), two transmembrane proteins (ZnuB) and a solute-binding protein (ZnuA).

It is found in the cell inner membrane. The catalysed reaction is Zn(2+)(out) + ATP(in) + H2O(in) = Zn(2+)(in) + ADP(in) + phosphate(in) + H(+)(in). Part of the ABC transporter complex ZnuABC involved in zinc import. Responsible for energy coupling to the transport system. The protein is Zinc import ATP-binding protein ZnuC of Jannaschia sp. (strain CCS1).